The chain runs to 169 residues: Small ribosomal subunit protein uS13c (169 aa).

A chloroplast-targeting transit peptide spans 1-47 (MAQMVAMPVAHSLSLICNWAKSNPLSRNTLALPASNTPNKQSLSIRC).

This sequence belongs to the universal ribosomal protein uS13 family. Part of the 30S ribosomal subunit.

The protein localises to the plastid. Its subcellular location is the chloroplast. Functionally, located at the top of the head of the 30S subunit, it contacts several helices of the 16S rRNA. The protein is Small ribosomal subunit protein uS13c (RPS13) of Arabidopsis thaliana (Mouse-ear cress).